We begin with the raw amino-acid sequence, 885 residues long: DNA mismatch repair protein MutS (885 aa).

626-633 (GPNMGGKS) serves as a coordination point for ATP.

The protein belongs to the DNA mismatch repair MutS family.

Functionally, this protein is involved in the repair of mismatches in DNA. It is possible that it carries out the mismatch recognition step. This protein has a weak ATPase activity. This Burkholderia cenocepacia (strain ATCC BAA-245 / DSM 16553 / LMG 16656 / NCTC 13227 / J2315 / CF5610) (Burkholderia cepacia (strain J2315)) protein is DNA mismatch repair protein MutS.